The sequence spans 173 residues: MTYFMLFLGLCFVLGGLGVASNPSPYYGVVGLVLASVVGCGWLLSLGVSFVSLVLFMVYLGGMLVVFVYSVSLAADPFPEAWGDWRVVGYGVSFIAVLVVGVVIGGLVECWDLGVITVDSVGMFSVRLDFSGVAMFYSCGVGMFLVAGWGLLLTLFVVLELVRGLSCGAIRAV.

5 consecutive transmembrane segments (helical) span residues 1–21 (MTYFMLFLGLCFVLGGLGVAS), 27–47 (YGVVGLVLASVVGCGWLLSLG), 48–68 (VSFVSLVLFMVYLGGMLVVFV), 87–107 (VVGYGVSFIAVLVVGVVIGGL), and 139–159 (CGVGMFLVAGWGLLLTLFVVL).

The protein belongs to the complex I subunit 6 family.

The protein localises to the mitochondrion membrane. The enzyme catalyses a ubiquinone + NADH + 5 H(+)(in) = a ubiquinol + NAD(+) + 4 H(+)(out). Core subunit of the mitochondrial membrane respiratory chain NADH dehydrogenase (Complex I) that is believed to belong to the minimal assembly required for catalysis. Complex I functions in the transfer of electrons from NADH to the respiratory chain. The immediate electron acceptor for the enzyme is believed to be ubiquinone. This Synthliboramphus hypoleucus (Guadalupe murrelet) protein is NADH-ubiquinone oxidoreductase chain 6 (MT-ND6).